The sequence spans 244 residues: 5-oxoprolinase subunit A (244 aa).

The protein belongs to the LamB/PxpA family. As to quaternary structure, forms a complex composed of PxpA, PxpB and PxpC.

The catalysed reaction is 5-oxo-L-proline + ATP + 2 H2O = L-glutamate + ADP + phosphate + H(+). In terms of biological role, catalyzes the cleavage of 5-oxoproline to form L-glutamate coupled to the hydrolysis of ATP to ADP and inorganic phosphate. In Escherichia coli O6:K15:H31 (strain 536 / UPEC), this protein is 5-oxoprolinase subunit A.